We begin with the raw amino-acid sequence, 317 residues long: Heme A synthase (317 aa).

The Cytoplasmic portion of the chain corresponds to 1–6; sequence MQRSLK. The chain crosses the membrane as a helical span at residues 7 to 27; it reads WFASTTTVAMLFVLIGGALVT. At 28–54 the chain is on the extracellular side; it reads KTDSGMGCGRSWPLCHGQWIPDDITPQ. Cysteines 35 and 42 form a disulfide. Residues 55–75 form a helical membrane-spanning segment; the sequence is LVIELSHRLVSGLAAIMVLIL. The active site involves E58. H61 contacts heme o. Over 76 to 91 the chain is Cytoplasmic; sequence CIRSWRVMGHVRETKP. The helical transmembrane segment at 92 to 112 threads the bilayer; that stretch reads LAVLSFVFLVLQSLIGAAAVV. The Extracellular portion of the chain corresponds to 113 to 123; it reads WGQSDFVMALH. Residue H123 participates in heme o binding. The helical transmembrane segment at 124-144 threads the bilayer; the sequence is FGISLISFAAVLLLTLLIFVV. Over 145–159 the chain is Cytoplasmic; sequence DKKFSPTSLQLDGQM. Residues 160-180 traverse the membrane as a helical segment; that stretch reads RFHIYGIIIYSYLVVYTGALV. Residues 181 to 214 are Extracellular-facing; the sequence is RHTNASLACPSWPLCAKSRLLPVQFHEWVQMGHR. The cysteines at positions 189 and 195 are disulfide-linked. Position 213 (H213) interacts with heme b. A helical transmembrane segment spans residues 215–235; that stretch reads LAAAVIIIWIAVATVHAARYY. At 236–243 the chain is on the cytoplasmic side; it reads REQPVIYY. Residues 244 to 264 traverse the membrane as a helical segment; the sequence is GWIISLLLVLAQMVTGALVVF. Residues 265–272 lie on the Extracellular side of the membrane; it reads TELNLYIS. Residues 273-293 traverse the membrane as a helical segment; the sequence is LAHAFFISCLFGVLSYLLLLA. Position 275 (H275) interacts with heme b. Residues 294–317 are Cytoplasmic-facing; the sequence is LRTRRRPATAAGRSVEDTASAPLK.

Belongs to the COX15/CtaA family. Type 1 subfamily. As to quaternary structure, interacts with CtaB. It depends on heme b as a cofactor.

It localises to the cell membrane. It carries out the reaction Fe(II)-heme o + 2 A + H2O = Fe(II)-heme a + 2 AH2. It functions in the pathway porphyrin-containing compound metabolism; heme A biosynthesis; heme A from heme O: step 1/1. In terms of biological role, catalyzes the conversion of heme O to heme A by two successive hydroxylations of the methyl group at C8. The first hydroxylation forms heme I, the second hydroxylation results in an unstable dihydroxymethyl group, which spontaneously dehydrates, resulting in the formyl group of heme A. The sequence is that of Heme A synthase from Geobacillus thermodenitrificans.